Consider the following 276-residue polypeptide: uncharacterized protein (276 aa).

This is an uncharacterized protein from Acanthamoeba polyphaga mimivirus (APMV).